A 305-amino-acid chain; its full sequence is Oxygen-dependent coproporphyrinogen-III oxidase (305 aa).

Ser98 contacts substrate. Residues His102 and His112 each coordinate a divalent metal cation. Catalysis depends on His112, which acts as the Proton donor. 114-116 (NVR) serves as a coordination point for substrate. The a divalent metal cation site is built by His151 and His181. The tract at residues 246-281 (YVEFNLVYDRGTLFGLQSGGRTESILMSMPPLARWE) is important for dimerization. Residue 264–266 (GGR) participates in substrate binding.

It belongs to the aerobic coproporphyrinogen-III oxidase family. As to quaternary structure, homodimer. A divalent metal cation serves as cofactor.

The protein resides in the cytoplasm. The enzyme catalyses coproporphyrinogen III + O2 + 2 H(+) = protoporphyrinogen IX + 2 CO2 + 2 H2O. It functions in the pathway porphyrin-containing compound metabolism; protoporphyrin-IX biosynthesis; protoporphyrinogen-IX from coproporphyrinogen-III (O2 route): step 1/1. In terms of biological role, involved in the heme biosynthesis. Catalyzes the aerobic oxidative decarboxylation of propionate groups of rings A and B of coproporphyrinogen-III to yield the vinyl groups in protoporphyrinogen-IX. This Vibrio vulnificus (strain YJ016) protein is Oxygen-dependent coproporphyrinogen-III oxidase.